The chain runs to 520 residues: Ribonuclease Y (520 aa).

The helical transmembrane segment at 3–23 (IVIVVISILLALIVGIVVGYL) threads the bilayer. The segment covering 81 to 118 (RMEAQKQENRLMQKEENLDRKSETLDKRESSLESKEQS) has biased composition (basic and acidic residues). Positions 81 to 125 (RMEAQKQENRLMQKEENLDRKSETLDKRESSLESKEQSLTEQQQQ) are disordered. In terms of domain architecture, KH spans 210-273 (TVSVVNLPND…EIARMALEKL (64 aa)). The HD domain occupies 336–429 (GLKHSAEVAY…VAAADALSAA (94 aa)).

This sequence belongs to the RNase Y family.

The protein localises to the cell membrane. Its function is as follows. Endoribonuclease that initiates mRNA decay. This chain is Ribonuclease Y, found in Oceanobacillus iheyensis (strain DSM 14371 / CIP 107618 / JCM 11309 / KCTC 3954 / HTE831).